The sequence spans 304 residues: Acetylglutamate kinase (304 aa).

Substrate contacts are provided by residues 69 to 70 (GG), arginine 91, and asparagine 202.

This sequence belongs to the acetylglutamate kinase family. ArgB subfamily.

The protein resides in the cytoplasm. It catalyses the reaction N-acetyl-L-glutamate + ATP = N-acetyl-L-glutamyl 5-phosphate + ADP. It functions in the pathway amino-acid biosynthesis; L-arginine biosynthesis; N(2)-acetyl-L-ornithine from L-glutamate: step 2/4. In terms of biological role, catalyzes the ATP-dependent phosphorylation of N-acetyl-L-glutamate. This is Acetylglutamate kinase from Caulobacter vibrioides (strain ATCC 19089 / CIP 103742 / CB 15) (Caulobacter crescentus).